The following is a 32-amino-acid chain: ATP synthase subunit O, mitochondrial (32 aa).

It belongs to the ATPase delta chain family. As to quaternary structure, F-type ATPases have 2 components, CF(1) - the catalytic core - and CF(0) - the membrane proton channel. CF(1) has five subunits: alpha(3), beta(3), gamma(1), delta(1), epsilon(1). CF(0) has three main subunits: a, b and c.

The protein resides in the mitochondrion. It localises to the mitochondrion inner membrane. Functionally, mitochondrial membrane ATP synthase (F(1)F(0) ATP synthase or Complex V) produces ATP from ADP in the presence of a proton gradient across the membrane which is generated by electron transport complexes of the respiratory chain. F-type ATPases consist of two structural domains, F(1) - containing the extramembraneous catalytic core and F(0) - containing the membrane proton channel, linked together by a central stalk and a peripheral stalk. During catalysis, ATP synthesis in the catalytic domain of F(1) is coupled via a rotary mechanism of the central stalk subunits to proton translocation. Part of the complex F(0) domain and the peripheric stalk, which acts as a stator to hold the catalytic alpha(3)beta(3) subcomplex and subunit a/ATP6 static relative to the rotary elements. The chain is ATP synthase subunit O, mitochondrial from Spinacia oleracea (Spinach).